Here is a 529-residue protein sequence, read N- to C-terminus: Bifunctional purine biosynthesis protein PurH (529 aa).

One can recognise an MGS-like domain in the interval 1 to 148 (MQQRRPVRRA…KNHKDVAIVV (148 aa)).

The protein belongs to the PurH family.

The catalysed reaction is (6R)-10-formyltetrahydrofolate + 5-amino-1-(5-phospho-beta-D-ribosyl)imidazole-4-carboxamide = 5-formamido-1-(5-phospho-D-ribosyl)imidazole-4-carboxamide + (6S)-5,6,7,8-tetrahydrofolate. It catalyses the reaction IMP + H2O = 5-formamido-1-(5-phospho-D-ribosyl)imidazole-4-carboxamide. It participates in purine metabolism; IMP biosynthesis via de novo pathway; 5-formamido-1-(5-phospho-D-ribosyl)imidazole-4-carboxamide from 5-amino-1-(5-phospho-D-ribosyl)imidazole-4-carboxamide (10-formyl THF route): step 1/1. Its pathway is purine metabolism; IMP biosynthesis via de novo pathway; IMP from 5-formamido-1-(5-phospho-D-ribosyl)imidazole-4-carboxamide: step 1/1. The polypeptide is Bifunctional purine biosynthesis protein PurH (Citrobacter koseri (strain ATCC BAA-895 / CDC 4225-83 / SGSC4696)).